We begin with the raw amino-acid sequence, 567 residues long: TGF-beta receptor type-2 (567 aa).

Positions 1-23 (MGRGLLRGLWPLHIVLWTRIAST) are cleaved as a signal peptide. Topologically, residues 24–166 (IPPHVPKSVN…SPDLLLVIIQ (143 aa)) are extracellular. 6 cysteine pairs are disulfide-bonded: Cys-51-Cys-84, Cys-54-Cys-71, Cys-61-Cys-67, Cys-77-Cys-101, Cys-121-Cys-136, and Cys-138-Cys-143. Residues Asn-70 and Asn-94 are each glycosylated (N-linked (GlcNAc...) asparagine). The chain crosses the membrane as a helical span at residues 167 to 187 (VTGVSLLPPLGIAIAVIAIFY). Residues 188–567 (CYRVHRQQKL…PEDGSLNTTK (380 aa)) lie on the Cytoplasmic side of the membrane. The region spanning 244–546 (IELDTLVGKG…RFSELEHPDR (303 aa)) is the Protein kinase domain. Residues 250–258 (VGKGRFAEV) and Lys-277 contribute to the ATP site. Catalysis depends on Asp-379, which acts as the Proton acceptor. Phosphoserine occurs at positions 409, 548, and 553. Positions 546–567 (RLSGRSCSQEKIPEDGSLNTTK) are disordered.

It belongs to the protein kinase superfamily. TKL Ser/Thr protein kinase family. TGFB receptor subfamily. In terms of assembly, homodimer. Heterohexamer; TGFB1, TGFB2 and TGFB3 homodimeric ligands assemble a functional receptor composed of two TGFBR1 and TGFBR2 heterodimers to form a ligand-receptor heterohexamer. The respective affinity of TGFRB1 and TGFRB2 for the ligands may modulate the kinetics of assembly of the receptor and may explain the different biological activities of TGFB1, TGFB2 and TGFB3. Component of a complex composed of TSC22D1 (via N-terminus), TGFBR1 and TGFBR2; the interaction between TSC22D1 and TGFBR1 is inhibited by SMAD7 and promoted by TGFB1. Interacts with DAXX. Interacts with DYNLT4. Interacts with ZFYVE9; ZFYVE9 recruits SMAD2 and SMAD3 to the TGF-beta receptor. Interacts with and is activated by SCUBE3; this interaction does not affect TGFB1-binding to TGFBR2. Interacts with VPS39; this interaction is independent of the receptor kinase activity and of the presence of TGF-beta. Interacts with CLU. Requires Mg(2+) as cofactor. Mn(2+) serves as cofactor. Phosphorylated on a Ser/Thr residue in the cytoplasmic domain.

Its subcellular location is the cell membrane. The protein resides in the membrane raft. It carries out the reaction L-threonyl-[receptor-protein] + ATP = O-phospho-L-threonyl-[receptor-protein] + ADP + H(+). It catalyses the reaction L-seryl-[receptor-protein] + ATP = O-phospho-L-seryl-[receptor-protein] + ADP + H(+). In terms of biological role, transmembrane serine/threonine kinase forming with the TGF-beta type I serine/threonine kinase receptor, TGFBR1, the non-promiscuous receptor for the TGF-beta cytokines TGFB1, TGFB2 and TGFB3. Transduces the TGFB1, TGFB2 and TGFB3 signal from the cell surface to the cytoplasm and is thus regulating a plethora of physiological and pathological processes including cell cycle arrest in epithelial and hematopoietic cells, control of mesenchymal cell proliferation and differentiation, wound healing, extracellular matrix production, immunosuppression and carcinogenesis. The formation of the receptor complex composed of 2 TGFBR1 and 2 TGFBR2 molecules symmetrically bound to the cytokine dimer results in the phosphorylation and the activation of TGFRB1 by the constitutively active TGFBR2. Activated TGFBR1 phosphorylates SMAD2 which dissociates from the receptor and interacts with SMAD4. The SMAD2-SMAD4 complex is subsequently translocated to the nucleus where it modulates the transcription of the TGF-beta-regulated genes. This constitutes the canonical SMAD-dependent TGF-beta signaling cascade. Also involved in non-canonical, SMAD-independent TGF-beta signaling pathways. This is TGF-beta receptor type-2 (Tgfbr2) from Rattus norvegicus (Rat).